The chain runs to 99 residues: MAPKKPNKKNVIQRRPSAEKRILTAQKRELINHSFKSKVKTIVKKFEASLKLDDTQATLSNLQSVYSVVDKAVKRGIFKDNKAARIKSKATLKVNARAS.

It belongs to the bacterial ribosomal protein bS20 family.

Functionally, binds directly to 16S ribosomal RNA. This Chlamydia pneumoniae (Chlamydophila pneumoniae) protein is Small ribosomal subunit protein bS20.